The primary structure comprises 185 residues: Ribosome-recycling factor (185 aa).

Belongs to the RRF family.

It is found in the cytoplasm. Its function is as follows. Responsible for the release of ribosomes from messenger RNA at the termination of protein biosynthesis. May increase the efficiency of translation by recycling ribosomes from one round of translation to another. In Haemophilus ducreyi (strain 35000HP / ATCC 700724), this protein is Ribosome-recycling factor.